Reading from the N-terminus, the 248-residue chain is 2,3-bisphosphoglycerate-dependent phosphoglycerate mutase (248 aa).

Substrate contacts are provided by residues 10–17, 23–24, Arg62, 89–92, Lys100, 116–117, and 183–184; these read RHGQSEWN, TG, ERHY, RR, and GN. Catalysis depends on His11, which acts as the Tele-phosphohistidine intermediate. Glu89 serves as the catalytic Proton donor/acceptor.

Belongs to the phosphoglycerate mutase family. BPG-dependent PGAM subfamily.

The catalysed reaction is (2R)-2-phosphoglycerate = (2R)-3-phosphoglycerate. Its pathway is carbohydrate degradation; glycolysis; pyruvate from D-glyceraldehyde 3-phosphate: step 3/5. In terms of biological role, catalyzes the interconversion of 2-phosphoglycerate and 3-phosphoglycerate. The polypeptide is 2,3-bisphosphoglycerate-dependent phosphoglycerate mutase (Corynebacterium diphtheriae (strain ATCC 700971 / NCTC 13129 / Biotype gravis)).